A 471-amino-acid chain; its full sequence is Putative pentatricopeptide repeat-containing protein At1g53330 (471 aa).

PPR repeat units follow at residues 46-81 (SLLC…RIVP), 82-116 (TEII…RCQR), 117-147 (TVKS…IDEF), 151-185 (DACT…KVKP), 186-221 (TGVT…GVRP), 222-256 (TVHI…KIKV), 257-291 (DAAI…GCKP), 292-326 (DTVT…GLKP), 327-361 (DVIS…GCSP), and 362-396 (DTLS…GYKP).

This sequence belongs to the PPR family. P subfamily.

In terms of biological role, involved during embryo development. This chain is Putative pentatricopeptide repeat-containing protein At1g53330, found in Arabidopsis thaliana (Mouse-ear cress).